Reading from the N-terminus, the 155-residue chain is Small ribosomal subunit protein uS7c (155 aa).

Belongs to the universal ribosomal protein uS7 family. In terms of assembly, part of the 30S ribosomal subunit.

It localises to the plastid. Its subcellular location is the chloroplast. Functionally, one of the primary rRNA binding proteins, it binds directly to 16S rRNA where it nucleates assembly of the head domain of the 30S subunit. The polypeptide is Small ribosomal subunit protein uS7c (rps7) (Ginkgo biloba (Ginkgo)).